We begin with the raw amino-acid sequence, 121 residues long: MVYNCGTRLERRKKRVRLKLKRNSSLLRLSIFKSNRHFYVQLIDDKCGRTFASASTLEREVVALTNRRVNSDSVKIVAKLMSDRLNKLDNCKKFIFDRGLYKYTGIVSEFANELRSYGFEF.

This sequence belongs to the universal ribosomal protein uL18 family. Part of the 50S ribosomal subunit; part of the 5S rRNA/L5/L18/L25 subcomplex. Contacts the 5S and 23S rRNAs.

Its function is as follows. This is one of the proteins that bind and probably mediate the attachment of the 5S RNA into the large ribosomal subunit, where it forms part of the central protuberance. This chain is Large ribosomal subunit protein uL18, found in Ehrlichia chaffeensis (strain ATCC CRL-10679 / Arkansas).